The chain runs to 230 residues: Somatolactin (230 aa).

The N-terminal stretch at 1 to 23 (MIKTKVLQAWMGIWLCAVNGLLG) is a signal peptide. Cystine bridges form between Cys-28-Cys-38, Cys-87-Cys-202, and Cys-219-Cys-227. An N-linked (GlcNAc...) asparagine glycan is attached at Asn-177.

This sequence belongs to the somatotropin/prolactin family.

It is found in the secreted. This chain is Somatolactin, found in Ictalurus punctatus (Channel catfish).